The primary structure comprises 312 residues: Methionyl-tRNA formyltransferase (312 aa).

Position 112-115 (112-115) interacts with (6S)-5,6,7,8-tetrahydrofolate; that stretch reads SLLP.

It belongs to the Fmt family.

The catalysed reaction is L-methionyl-tRNA(fMet) + (6R)-10-formyltetrahydrofolate = N-formyl-L-methionyl-tRNA(fMet) + (6S)-5,6,7,8-tetrahydrofolate + H(+). Attaches a formyl group to the free amino group of methionyl-tRNA(fMet). The formyl group appears to play a dual role in the initiator identity of N-formylmethionyl-tRNA by promoting its recognition by IF2 and preventing the misappropriation of this tRNA by the elongation apparatus. This chain is Methionyl-tRNA formyltransferase, found in Dehalococcoides mccartyi (strain CBDB1).